Consider the following 120-residue polypeptide: uncharacterized protein (120 aa).

Residues 19–41 (YPELFITWCVMTYTFGVAGYMLG) traverse the membrane as a helical segment. The interval 57-78 (SKNAHPWEDTKSSSGKSDESLD) is disordered. Residues 61–75 (HPWEDTKSSSGKSDE) are compositionally biased toward basic and acidic residues.

It is found in the membrane. This is an uncharacterized protein from Schizosaccharomyces pombe (strain 972 / ATCC 24843) (Fission yeast).